A 68-amino-acid polypeptide reads, in one-letter code: MNKALVWLITLLFLIFSATPNRVLAHPPYISPKTRAREGVWDHKIMKVRKIGVGASNSGHSPGAGGIP.

The N-terminal stretch at 1–25 (MNKALVWLITLLFLIFSATPNRVLA) is a signal peptide. An SCOOP motif motif is present at residues 50–64 (KIGVGASNSGHSPGA). Positions 56–58 (SNS) match the SxS motif essential for MIK2 binding motif.

This sequence belongs to the serine rich endogenous peptide (SCOOP) phytocytokine family. Interacts with MIK2 (via extracellular leucine-rich repeat domain); this interaction triggers the formation of complex between MIK2 and the BAK1/SERK3 and SERK4 coreceptors, and subsequent BAK1 activation by phosphorylation.

It is found in the cell membrane. The protein resides in the secreted. Its subcellular location is the extracellular space. The protein localises to the apoplast. Functionally, brassicaceae-specific phytocytokine (plant endogenous peptide released into the apoplast) perceived by MIK2 in a BAK1/SERK3 and SERK4 coreceptors-dependent manner, that modulates various physiological and antimicrobial processes including growth prevention and reactive oxygen species (ROS) response regulation. This chain is Serine rich endogenous peptide 22, found in Arabidopsis thaliana (Mouse-ear cress).